A 417-amino-acid chain; its full sequence is WD repeat and FYVE domain-containing protein 2 (417 aa).

4 WD repeats span residues 29-68 (GHVA…QFWP), 119-157 (CHAG…NKVG), 202-241 (AHTN…GEAY), and 245-284 (GHNG…VETP). An FYVE-type zinc finger spans residues 286–357 (WKTSDCCQKC…ICNDCAGRMK (72 aa)). Zn(2+) is bound by residues Cys292, Cys295, Cys319, Cys322, Cys327, Cys330, Cys349, and Cys352. The WD 5 repeat unit spans residues 373–412 (EIRTGITAMHLQETLGLLVTSGQNRVVMIWDVRSVCSAPS).

In terms of biological role, plays a role in coelomocyte endocytosis. The polypeptide is WD repeat and FYVE domain-containing protein 2 (Caenorhabditis briggsae).